We begin with the raw amino-acid sequence, 145 residues long: MSKLAVSSSFSLLCGNCKRGHVGLECYSDVPTNNLLSNEHLHSLESFVNEVSSEWCCHLVDGNTLAIFLPFDQSTWNLSKGAFVSLLEFCEDNLPIKRILLCLNKINVDETVVSCFKYLGFSPLHPHLYPSCIDSQGVFVMVYSM.

This sequence belongs to the ODC antizyme family. In terms of assembly, interacts with ODC1 and thereby sterically blocks ODC homodimerization.

Its function is as follows. Ornithine decarboxylase (ODC) antizyme protein that negatively regulates ODC activity and intracellular polyamine biosynthesis and uptake in response to increased intracellular polyamine levels. Binds to ODC monomers, inhibiting the assembly of the functional ODC homodimer, and targets the monomers for ubiquitin-independent proteolytic destruction by the 26S proteasome. The chain is Ornithine decarboxylase antizyme from Onchocerca volvulus.